A 157-amino-acid polypeptide reads, in one-letter code: Transcription elongation factor GreA (157 aa).

Residues 13–75 (RARLEAELEE…EIKSILARAQ (63 aa)) are a coiled coil. The interval 113 to 142 (EAKPSEGKISNESPIGSALLGKRPRQKVTV) is disordered.

Belongs to the GreA/GreB family.

Necessary for efficient RNA polymerase transcription elongation past template-encoded arresting sites. The arresting sites in DNA have the property of trapping a certain fraction of elongating RNA polymerases that pass through, resulting in locked ternary complexes. Cleavage of the nascent transcript by cleavage factors such as GreA or GreB allows the resumption of elongation from the new 3'terminus. GreA releases sequences of 2 to 3 nucleotides. This chain is Transcription elongation factor GreA, found in Roseiflexus sp. (strain RS-1).